A 993-amino-acid polypeptide reads, in one-letter code: Ephrin type-B receptor 3 (993 aa).

Positions 1–29 (MAGARPPPGLLPLLAPLLLPLLLPAGCWA) are cleaved as a signal peptide. Topologically, residues 30 to 554 (LEETLMDTKW…AQQLQEQLPL (525 aa)) are extracellular. Positions 31–209 (EETLMDTKWV…FYKKCASTTA (179 aa)) constitute an Eph LBD domain. Cysteines 73 and 191 form a disulfide. 2 Fibronectin type-III domains span residues 331–446 (VPSP…TNQA) and 447–540 (APSE…TTSE). N-linked (GlcNAc...) asparagine glycans are attached at residues asparagine 343 and asparagine 440. The helical transmembrane segment at 555 to 575 (IVGSTVAGFVFMVVVVVIALV) threads the bilayer. At 576 to 993 (CLRKQRHGPD…QMNQTLPVQV (418 aa)) the chain is on the cytoplasmic side. Tyrosine 609 is modified (phosphotyrosine; by autocatalysis). Residues 628–891 (VKIEEVIGAG…QIVNTLDKLI (264 aa)) form the Protein kinase domain. ATP-binding positions include 634–642 (IGAGEFGEV) and lysine 660. Aspartate 753 serves as the catalytic Proton acceptor. Residues 920 to 984 (TTFTTVGDWL…LCSIQDMRLQ (65 aa)) enclose the SAM domain. The PDZ-binding signature appears at 991-993 (VQV).

This sequence belongs to the protein kinase superfamily. Tyr protein kinase family. Ephrin receptor subfamily. Heterotetramer upon binding of the ligand. The heterotetramer is composed of an ephrin dimer and a receptor dimer. Oligomerization is probably required to induce biological responses. Phosphorylated. Autophosphorylates upon ligand-binding. Autophosphorylation on Tyr-609 is required for interaction with SH2 domain-containing proteins. In terms of processing, ubiquitinated by RNF186, mainly through 'Lys-48' and 'Lys-63'-linked polyubiquitin chains. As to expression, expressed in cells of the retinal ganglion cell layer during retinal axon guidance to the optic disk. Expressed by Paneth and progenitor cells in the crypts of the intestinal epithelium (at protein level). Expressed in myogenic progenitor cells.

The protein localises to the cell membrane. It is found in the cell projection. Its subcellular location is the dendrite. The enzyme catalyses L-tyrosyl-[protein] + ATP = O-phospho-L-tyrosyl-[protein] + ADP + H(+). Functionally, receptor tyrosine kinase which binds promiscuously transmembrane ephrin-B family ligands residing on adjacent cells, leading to contact-dependent bidirectional signaling into neighboring cells. The signaling pathway downstream of the receptor is referred to as forward signaling while the signaling pathway downstream of the ephrin ligand is referred to as reverse signaling. Generally has an overlapping and redundant function with EPHB2. Like EPHB2, functions in axon guidance during development regulating for instance the neurons forming the corpus callosum and the anterior commissure, 2 major interhemispheric connections between the temporal lobes of the cerebral cortex. In addition to its role in axon guidance also plays an important redundant role with other ephrin-B receptors in development and maturation of dendritic spines and the formation of excitatory synapses. Controls other aspects of development through regulation of cell migration and positioning. This includes angiogenesis, palate development and thymic epithelium development for instance. Forward and reverse signaling through the EFNB2/EPHB3 complex also regulate migration and adhesion of cells that tubularize the urethra and septate the cloaca. Finally, plays an important role in intestinal epithelium differentiation segregating progenitor from differentiated cells in the crypt. The protein is Ephrin type-B receptor 3 (Ephb3) of Mus musculus (Mouse).